We begin with the raw amino-acid sequence, 576 residues long: A-type ATP synthase subunit A (576 aa).

228 to 235 (GGFGTGKT) is an ATP binding site.

The protein belongs to the ATPase alpha/beta chains family. As to quaternary structure, has multiple subunits with at least A(3), B(3), C, D, E, F, H, I and proteolipid K(x).

It localises to the cell membrane. The catalysed reaction is ATP + H2O + 4 H(+)(in) = ADP + phosphate + 5 H(+)(out). Its function is as follows. Component of the A-type ATP synthase that produces ATP from ADP in the presence of a proton gradient across the membrane. The A chain is the catalytic subunit. The protein is A-type ATP synthase subunit A of Methanothrix thermoacetophila (strain DSM 6194 / JCM 14653 / NBRC 101360 / PT) (Methanosaeta thermophila).